Reading from the N-terminus, the 300-residue chain is TLR adapter interacting with SLC15A4 on the lysosome (300 aa).

The pLxIS motif signature appears at 289–293 (SLHIS). Ser-293 bears the Phosphoserine mark.

In terms of assembly, interacts (via pLxIS motif) with IRF5; leading to IRF5 activation. Interacts with SLC15A4; leading to its recruitment to endolysosome. In terms of processing, the phosphorylated pLxIS motif constitutes an IRF5-binding motif, leading to recruitment of the transcription factor IRF5 to induce type-I interferons and other cytokines.

The protein resides in the lysosome membrane. Its subcellular location is the endosome membrane. It is found in the nucleus. It localises to the cytoplasm. Functionally, innate immune adapter that mediates the recruitment and activation of IRF5 downstream of endolysosomal toll-like receptors TLR7, TLR8 and TLR9. Following recruitment to endolysosome by SLC15A4 downstream of TLR7, TLR8 and TLR9, specifically recruits IRF5 transcription factor via its pLxIS motif, leading to IRF5 activation and subsequent expression of type I interferons. Plays a role in the regulation of endolysosomal pH in immune cells such as B-cells, dendritic cells and monocytes. The polypeptide is TLR adapter interacting with SLC15A4 on the lysosome (Bos taurus (Bovine)).